Consider the following 294-residue polypeptide: NAD kinase (294 aa).

The active-site Proton acceptor is the Asp74. NAD(+) is bound by residues 74-75 (DG), 148-149 (NE), His159, Arg176, Asp178, 189-194 (TAYSLS), and Gln249.

This sequence belongs to the NAD kinase family. A divalent metal cation is required as a cofactor.

The protein resides in the cytoplasm. It catalyses the reaction NAD(+) + ATP = ADP + NADP(+) + H(+). Involved in the regulation of the intracellular balance of NAD and NADP, and is a key enzyme in the biosynthesis of NADP. Catalyzes specifically the phosphorylation on 2'-hydroxyl of the adenosine moiety of NAD to yield NADP. The polypeptide is NAD kinase (Vibrio atlanticus (strain LGP32) (Vibrio splendidus (strain Mel32))).